The chain runs to 409 residues: Elongation factor 1-gamma (409 aa).

Residues 2 to 81 (SVGTVYGKIG…YLASLNKTRA (80 aa)) enclose the GST N-terminal domain. The region spanning 86–212 (TAEEKAKVLQ…EPLKFIDQPL (127 aa)) is the GST C-terminal domain. Positions 219-248 (NKEAAPAKKAEKKKDEKKKNAPKPQAERPA) are enriched in basic and acidic residues. A disordered region spans residues 219-261 (NKEAAPAKKAEKKKDEKKKNAPKPQAERPAKPPKHPLASAPNG). The EF-1-gamma C-terminal domain occupies 251-409 (PKHPLASAPN…REVADGKVCK (159 aa)).

As to quaternary structure, EF-1 is composed of four subunits: alpha, beta, delta, and gamma.

In terms of biological role, probably plays a role in anchoring the complex to other cellular components. The sequence is that of Elongation factor 1-gamma (tef3) from Schizosaccharomyces pombe (strain 972 / ATCC 24843) (Fission yeast).